The following is a 62-amino-acid chain: DNA-directed RNA polymerase subunit Rpo10 (62 aa).

Zn(2+) is bound by residues cysteine 6, cysteine 9, cysteine 43, and cysteine 44.

It belongs to the archaeal Rpo10/eukaryotic RPB10 RNA polymerase subunit family. In terms of assembly, part of the RNA polymerase complex. Zn(2+) serves as cofactor.

Its subcellular location is the cytoplasm. The catalysed reaction is RNA(n) + a ribonucleoside 5'-triphosphate = RNA(n+1) + diphosphate. DNA-dependent RNA polymerase (RNAP) catalyzes the transcription of DNA into RNA using the four ribonucleoside triphosphates as substrates. The polypeptide is DNA-directed RNA polymerase subunit Rpo10 (Methanospirillum hungatei JF-1 (strain ATCC 27890 / DSM 864 / NBRC 100397 / JF-1)).